The primary structure comprises 684 residues: DNA ligase (684 aa).

Residues 34-38 (DYDFD), 83-84 (SL), and Glu-117 contribute to the NAD(+) site. The active-site N6-AMP-lysine intermediate is the Lys-119. NAD(+) contacts are provided by Arg-140, Glu-188, Lys-301, and Lys-325. Positions 419, 422, 437, and 443 each coordinate Zn(2+). The BRCT domain maps to 602 to 684 (DAPQTFAGMT…QTMLAAESGD (83 aa)).

The protein belongs to the NAD-dependent DNA ligase family. LigA subfamily. It depends on Mg(2+) as a cofactor. Mn(2+) serves as cofactor.

The enzyme catalyses NAD(+) + (deoxyribonucleotide)n-3'-hydroxyl + 5'-phospho-(deoxyribonucleotide)m = (deoxyribonucleotide)n+m + AMP + beta-nicotinamide D-nucleotide.. Functionally, DNA ligase that catalyzes the formation of phosphodiester linkages between 5'-phosphoryl and 3'-hydroxyl groups in double-stranded DNA using NAD as a coenzyme and as the energy source for the reaction. It is essential for DNA replication and repair of damaged DNA. This chain is DNA ligase, found in Chloroherpeton thalassium (strain ATCC 35110 / GB-78).